The primary structure comprises 2299 residues: MKQEAAKRHPFKSWIFELREILREIKNSHYFLDSWTKFDSVGSFTHIFFHQERFMKLFDPRIWSILLSRDSQGSTSNRYFTTKGVVLLVVAVLIYRINNRNMVERKNIYLMGLLPIPMNSIGPRNDPLEESFGSSNINRLIVSLLYLPKGKKISESCFMDPKESTWVLPITKKCIMPESNWGSRWWRNRVGKKRDSSCKISNETVAGIEISFKEKDIKYLESPFVSYTDDPIRKDHDWELFDRLSPRKKRNIINLNSGQLFEILVKHWICYLMSSFREKRLIEVEGFFKQQGAGSTIQSNDIEHVSHLFSRNKWGISLQNCAQFHMWQFRQDLFVSWEKNPHESDFFRNVSRENWIWLDNVWLVNKDRFFSFFSKVRNVSSNMQYDSTRSIFVQVTDSSQLKGSSDQSRDHFDSISNEDSEYHTLINQREIQQLKERSILWDPSFLQTERTEIESDRFPKCLSGYSSMSRLFTEREKQMKNHLLPEEIEEFLGNPTRSIRSFFSDRWSELHLGSNPTERSTRDQKLLKKQQDVSFVPSRRSENKEMVDIFKIITYLQNTVSIHPISSDPGCDMVPKDEPDMDSSNKISFLNQNDLFHDRNRGGYTLHHDFESEERFQEMADLLTLSITEPDLVYHKGFAFSIDSYGLDQKKFLNEVFNSRDESKKKSLLVLPPIFYEENESFYRRIRKKWVRISCGNALEDPKPKRVVFASNNIMKAVNQYRLIQNLIQIQYSIHGYIRNVSNQFFLMNRPDRNFEYGIQRDQIGNDTLNHRTIMKYTINQHLSNLKKSQKKWFDPLISRTERSMNRDPDAYRYKWSNGSKNFQEHLEHFVSEQKSRFQVVFDRLRINQYSIDWSEVIDKQDLSKSLRFFLSKLLLFLSKLLLFLSKSLPFFFVSIGNIPIHRSEIHIYELKGPNDQLCNQLLESIGVQIVHLNKLKPFLLDDHDTSQKSKLLINGGTISPFLFNKIPKWMIDSFHTRKNRRKSLDNTDSYFSMISHDRDNWLNPVKPFHRSSLISSFYKANRLRFLNNPHHFWFYCNKRFPFYVERARINNYDLTYGQFLNILFIRNKIFSLCVGKKKHVFLERDTPIESQVSNIFIPNDFPPSGDETYNLYKSFHFPIRSAPFVRRALYSIADISGTPLTEGQIVNFERTYCQPLSDMNPSDSEGKNLHQYLNFNSNMGLIHIPCSEKYLPSEKRKKRSLCLKKCVEKRQMYRPFQRDSAFSNFSKWNLFQTYMPWFLTSTGCKYLNFTLLDTFSDLLPILSSSQNFVSIFHDIMHGSDISWPIPQKKLWVILPQWNLISEISSKCLHNLLLSEEMIRRNNESPIPLIWAHLRSPNAREFLYSILFLLLVAGYLVRTHLLFVSRASSELQTEFEKIKSLMIPSYMIELRKLLDGYPTSELNSFWLKNLFLVALKQLGDFLEEIRGSASGGNMLLGGGPAYGVKSIRSKKKYLNINLIDIIDFLSIIPNPINRITFSRNTRHLSRTSKEIYSLIRKRKNVNGDWIDDKIESWVANSDSIDDEEREFLVQFSTLMKEKRIDKILLSLTHSDHLSKNDSGYQMIEQPGSVYLRYLVYIHKKYLMNYEFNRSCLAERRIFLAHYQTITYSQTSCGANSFHFPSHGKPFSLRLALSPSRGILVIGSIGTGRSYLVKYLTTNSYVPFITVFPNKFLDDKPKGYLIDDINIDDSDDIDDSDDIDDDLDIDTELLTMMNALTMDMTPKIDRFYITLQLELAKAMSPCIIWIPNIHDLSVNESNYLSLGLLVNHLSRDCERSSTRNILVIASTHIPQKVDPTLIAPNKSNTCIKIRRLLIPQQRKHFFTLSYTRGFHLEKKMFHTNGFGSITMGSNARDLVALTNEALSISITQKKSIIDTNTIRSALHRQTWDLRSQVRSVQDHGILFYQIGRAVAQNVLLSNCPIDPISIYMKKKSCTEGDSYLYKWYFELGTSMKKLTILLYLLSCSAGSVAQDLWSPPGPDEKNWITSYGFVENDSDLVHGLLEVEDALVGSSRTEKDCSQFDNDRVTLLLRSEPRNPLDMMQNGSCSIVDQRFLYEKYESEFEEGEGEGALDPQQLEEDLFNHIVWAPRIWRPCGNLFDCIESPNELGFPYWARSFRGKRIIDHEHEEDELQENDSEFLQSGTMQYQTRDRSFKEQGFFRISQFIWDPADPFFFLFKDQPFVSVFSRREFFADQEMSKGLLTSQTDPSTSMNKRWFINNTQEKHFELLIHRQRWLRTNSSLSNGSFRSNTPSESYQYLSNLFLSNGTLLDQMTKTLLRKRWLFPDEMKHLIHVTGERFPIP.

1642–1649 (GSIGTGRS) serves as a coordination point for ATP.

The protein belongs to the Ycf2 family.

The protein resides in the plastid. It localises to the chloroplast stroma. In terms of biological role, probable ATPase of unknown function. Its presence in a non-photosynthetic plant (Epifagus virginiana) and experiments in tobacco indicate that it has an essential function which is probably not related to photosynthesis. The sequence is that of Protein Ycf2 from Nandina domestica (Heavenly bamboo).